Reading from the N-terminus, the 313-residue chain is D-beta-D-heptose 7-phosphate kinase (313 aa).

196-199 is a binding site for ATP; that stretch reads NRAE. The active site involves Asp-264.

The enzyme catalyses D-glycero-beta-D-manno-heptose 7-phosphate + ATP = D-glycero-beta-D-manno-heptose 1,7-bisphosphate + ADP + H(+). The protein operates within nucleotide-sugar biosynthesis; ADP-L-glycero-beta-D-manno-heptose biosynthesis; ADP-L-glycero-beta-D-manno-heptose from D-glycero-beta-D-manno-heptose 7-phosphate: step 1/4. It functions in the pathway bacterial outer membrane biogenesis; LPS core biosynthesis. Catalyzes the phosphorylation of D-glycero-D-manno-heptose 7-phosphate at the C-1 position to selectively form D-glycero-beta-D-manno-heptose-1,7-bisphosphate. This chain is D-beta-D-heptose 7-phosphate kinase (rfaE), found in Bordetella bronchiseptica (strain ATCC BAA-588 / NCTC 13252 / RB50) (Alcaligenes bronchisepticus).